A 689-amino-acid chain; its full sequence is Methionine--tRNA ligase (689 aa).

The 'HIGH' region signature appears at 15–25; it reads PYANGPIHLGH. Zn(2+) contacts are provided by C146, C149, C159, and C162. The 'KMSKS' region motif lies at 332 to 336; sequence KMSKS. Position 335 (K335) interacts with ATP. A disordered region spans residues 546-577; that stretch reads KDNLQPTEAPKADKKADKKVEKKATTGDPLTD. Basic and acidic residues predominate over residues 555 to 570; sequence PKADKKADKKVEKKAT. The region spanning 588-689 is the tRNA-binding domain; the sequence is DFAKLDLRIA…QGAKPGMRVK (102 aa).

It belongs to the class-I aminoacyl-tRNA synthetase family. MetG type 1 subfamily. In terms of assembly, homodimer. Requires Zn(2+) as cofactor.

It is found in the cytoplasm. It carries out the reaction tRNA(Met) + L-methionine + ATP = L-methionyl-tRNA(Met) + AMP + diphosphate. Functionally, is required not only for elongation of protein synthesis but also for the initiation of all mRNA translation through initiator tRNA(fMet) aminoacylation. This chain is Methionine--tRNA ligase, found in Shewanella denitrificans (strain OS217 / ATCC BAA-1090 / DSM 15013).